We begin with the raw amino-acid sequence, 874 residues long: Tyrosine-protein kinase receptor TYRO3 (874 aa).

The first 20 residues, 1–20 (MEVSLCILLFLLHFNEGIHG), serve as a signal peptide directing secretion. 2 Ig-like C2-type domains span residues 21–106 (VRFT…IISS) and 117–198 (PHFG…GTVH). Over 21–411 (VRFTQKPFHQ…QAQTQRGHMW (391 aa)) the chain is Extracellular. The cysteines at positions 42 and 95 are disulfide-linked. N-linked (GlcNAc...) asparagine glycosylation is found at asparagine 135, asparagine 174, asparagine 217, asparagine 270, asparagine 305, and asparagine 373. Cysteine 138 and cysteine 181 form a disulfide bridge. 2 consecutive Fibronectin type-III domains span residues 202–297 (RPDS…TPQA) and 299–403 (PSAA…AMQA). The chain crosses the membrane as a helical span at residues 412-432 (VGLLFGLLVATMVGLLLIVLI). Residues 433–874 (RNRGKETQFG…EEEEDVIINV (442 aa)) are Cytoplasmic-facing. Residues 497–768 (LTLGRMLGKG…QHLIDQLELL (272 aa)) form the Protein kinase domain. ATP contacts are provided by residues 503 to 511 (LGKGEFGSV) and lysine 529. The active-site Proton acceptor is the aspartate 634. At tyrosine 665 the chain carries Phosphotyrosine; by autocatalysis.

Belongs to the protein kinase superfamily. Tyr protein kinase family. AXL/UFO subfamily.

The protein localises to the cell membrane. It catalyses the reaction L-tyrosyl-[protein] + ATP = O-phospho-L-tyrosyl-[protein] + ADP + H(+). In terms of biological role, may be involved in cell adhesion processes, particularly in the central nervous system. The polypeptide is Tyrosine-protein kinase receptor TYRO3 (tyro3) (Danio rerio (Zebrafish)).